The chain runs to 781 residues: Sialidase (781 aa).

A signal peptide spans 1–24 (MRFKNVKKTALMLAMFGMATSSNA). Arg224 provides a ligand contact to substrate. Catalysis depends on Asp250, which acts as the Proton acceptor. BNR repeat units follow at residues 263–274 (RTSRDGGITWDT) and 585–596 (IYSDDGGSNWQT). The active site involves Glu619. Arg635 contributes to the substrate binding site. The stretch at 653 to 664 (FLSKDGGITWSL) is one BNR 3 repeat. Position 712 (Arg712) interacts with substrate. The stretch at 718-729 (WFSFDEGVTWKG) is one BNR 4 repeat. Tyr740 functions as the Nucleophile in the catalytic mechanism.

It belongs to the glycosyl hydrolase 33 family. In terms of assembly, monomer. Ca(2+) serves as cofactor.

It localises to the secreted. It catalyses the reaction Hydrolysis of alpha-(2-&gt;3)-, alpha-(2-&gt;6)-, alpha-(2-&gt;8)- glycosidic linkages of terminal sialic acid residues in oligosaccharides, glycoproteins, glycolipids, colominic acid and synthetic substrates.. Cleaves the terminal sialic acid (N-acetyl neuraminic acid) from carbohydrate chains in glycoproteins providing free sialic acid which can be used as carbon and energy sources. Sialidases have been suggested to be pathogenic factors in microbial infections. Facilitates cholera toxin binding to host intestinal epithelial cells by converting cell surface polysialogangliosides to GM1 monogangliosides. The chain is Sialidase (nanH) from Vibrio cholerae serotype O1 (strain ATCC 39541 / Classical Ogawa 395 / O395).